Here is a 237-residue protein sequence, read N- to C-terminus: Putative N-acetylmannosamine-6-phosphate 2-epimerase (237 aa).

This sequence belongs to the NanE family.

It carries out the reaction an N-acyl-D-glucosamine 6-phosphate = an N-acyl-D-mannosamine 6-phosphate. It functions in the pathway amino-sugar metabolism; N-acetylneuraminate degradation; D-fructose 6-phosphate from N-acetylneuraminate: step 3/5. In terms of biological role, converts N-acetylmannosamine-6-phosphate (ManNAc-6-P) to N-acetylglucosamine-6-phosphate (GlcNAc-6-P). This Caldanaerobacter subterraneus subsp. tengcongensis (strain DSM 15242 / JCM 11007 / NBRC 100824 / MB4) (Thermoanaerobacter tengcongensis) protein is Putative N-acetylmannosamine-6-phosphate 2-epimerase.